The chain runs to 116 residues: UPF0342 protein CTC_01059 (116 aa).

Belongs to the UPF0342 family.

This chain is UPF0342 protein CTC_01059, found in Clostridium tetani (strain Massachusetts / E88).